The following is a 231-amino-acid chain: 2-C-methyl-D-erythritol 4-phosphate cytidylyltransferase (231 aa).

This sequence belongs to the IspD/TarI cytidylyltransferase family. IspD subfamily.

The catalysed reaction is 2-C-methyl-D-erythritol 4-phosphate + CTP + H(+) = 4-CDP-2-C-methyl-D-erythritol + diphosphate. It functions in the pathway isoprenoid biosynthesis; isopentenyl diphosphate biosynthesis via DXP pathway; isopentenyl diphosphate from 1-deoxy-D-xylulose 5-phosphate: step 2/6. Catalyzes the formation of 4-diphosphocytidyl-2-C-methyl-D-erythritol from CTP and 2-C-methyl-D-erythritol 4-phosphate (MEP). The sequence is that of 2-C-methyl-D-erythritol 4-phosphate cytidylyltransferase from Xylella fastidiosa (strain M23).